Consider the following 98-residue polypeptide: NADH-ubiquinone oxidoreductase chain 4L (98 aa).

3 helical membrane passes run 1 to 21 (MTLI…GLLM), 29 to 49 (ALLC…LTIL), and 61 to 81 (IILL…LVMV).

It belongs to the complex I subunit 4L family. As to quaternary structure, core subunit of respiratory chain NADH dehydrogenase (Complex I) which is composed of 45 different subunits.

Its subcellular location is the mitochondrion inner membrane. The enzyme catalyses a ubiquinone + NADH + 5 H(+)(in) = a ubiquinol + NAD(+) + 4 H(+)(out). Its function is as follows. Core subunit of the mitochondrial membrane respiratory chain NADH dehydrogenase (Complex I) which catalyzes electron transfer from NADH through the respiratory chain, using ubiquinone as an electron acceptor. Part of the enzyme membrane arm which is embedded in the lipid bilayer and involved in proton translocation. This Megaptera novaeangliae (Humpback whale) protein is NADH-ubiquinone oxidoreductase chain 4L (MT-ND4L).